The following is a 76-amino-acid chain: Exodeoxyribonuclease 7 small subunit (76 aa).

The protein belongs to the XseB family. Heterooligomer composed of large and small subunits.

The protein localises to the cytoplasm. The catalysed reaction is Exonucleolytic cleavage in either 5'- to 3'- or 3'- to 5'-direction to yield nucleoside 5'-phosphates.. Functionally, bidirectionally degrades single-stranded DNA into large acid-insoluble oligonucleotides, which are then degraded further into small acid-soluble oligonucleotides. This is Exodeoxyribonuclease 7 small subunit from Latilactobacillus sakei subsp. sakei (strain 23K) (Lactobacillus sakei subsp. sakei).